Reading from the N-terminus, the 441-residue chain is Ribulose bisphosphate carboxylase large chain (441 aa).

Substrate is bound by residues asparagine 89 and threonine 139. Lysine 141 (proton acceptor) is an active-site residue. Lysine 143 contacts substrate. The Mg(2+) site is built by lysine 167, aspartate 169, and glutamate 170. Lysine 167 is subject to N6-carboxylysine. The active-site Proton acceptor is histidine 260. Residues arginine 261, histidine 293, and serine 345 each coordinate substrate.

Belongs to the RuBisCO large chain family. Type I subfamily. As to quaternary structure, heterohexadecamer of 8 large chains and 8 small chains; disulfide-linked. The disulfide link is formed within the large subunit homodimers. Requires Mg(2+) as cofactor. In terms of processing, the disulfide bond which can form in the large chain dimeric partners within the hexadecamer appears to be associated with oxidative stress and protein turnover.

The protein resides in the plastid. It localises to the chloroplast. The catalysed reaction is 2 (2R)-3-phosphoglycerate + 2 H(+) = D-ribulose 1,5-bisphosphate + CO2 + H2O. The enzyme catalyses D-ribulose 1,5-bisphosphate + O2 = 2-phosphoglycolate + (2R)-3-phosphoglycerate + 2 H(+). Functionally, ruBisCO catalyzes two reactions: the carboxylation of D-ribulose 1,5-bisphosphate, the primary event in carbon dioxide fixation, as well as the oxidative fragmentation of the pentose substrate in the photorespiration process. Both reactions occur simultaneously and in competition at the same active site. The sequence is that of Ribulose bisphosphate carboxylase large chain from Fouquieria splendens (Ocotillo).